Here is a 465-residue protein sequence, read N- to C-terminus: ATP synthase subunit beta (465 aa).

152–159 is an ATP binding site; it reads GGAGVGKT.

Belongs to the ATPase alpha/beta chains family. As to quaternary structure, F-type ATPases have 2 components, CF(1) - the catalytic core - and CF(0) - the membrane proton channel. CF(1) has five subunits: alpha(3), beta(3), gamma(1), delta(1), epsilon(1). CF(0) has three main subunits: a(1), b(2) and c(9-12). The alpha and beta chains form an alternating ring which encloses part of the gamma chain. CF(1) is attached to CF(0) by a central stalk formed by the gamma and epsilon chains, while a peripheral stalk is formed by the delta and b chains.

It is found in the cell inner membrane. The enzyme catalyses ATP + H2O + 4 H(+)(in) = ADP + phosphate + 5 H(+)(out). Functionally, produces ATP from ADP in the presence of a proton gradient across the membrane. The catalytic sites are hosted primarily by the beta subunits. The chain is ATP synthase subunit beta from Campylobacter fetus subsp. fetus (strain 82-40).